The sequence spans 136 residues: uncharacterized protein (136 aa).

A helical transmembrane segment spans residues 14–34 (ASVFAFFVLFLFCLKIILVLF).

Its subcellular location is the membrane. This is an uncharacterized protein from Mycoplasma genitalium (strain ATCC 33530 / DSM 19775 / NCTC 10195 / G37) (Mycoplasmoides genitalium).